The chain runs to 457 residues: Argininosuccinate lyase (457 aa).

It belongs to the lyase 1 family. Argininosuccinate lyase subfamily.

The protein resides in the cytoplasm. The catalysed reaction is 2-(N(omega)-L-arginino)succinate = fumarate + L-arginine. It functions in the pathway amino-acid biosynthesis; L-arginine biosynthesis; L-arginine from L-ornithine and carbamoyl phosphate: step 3/3. The chain is Argininosuccinate lyase from Yersinia pseudotuberculosis serotype O:3 (strain YPIII).